The chain runs to 97 residues: HssA/B-like protein 32 (97 aa).

2 disordered regions span residues 1-23 (MTLF…SLAS) and 62-97 (AKSS…GSCS). The span at 62 to 74 (AKSSGGSCGGKGG) shows a compositional bias: gly residues. Over residues 75–88 (SHNHGHGHGPHGHG) the composition is skewed to basic residues.

It belongs to the hssA/B family.

This chain is HssA/B-like protein 32 (hssl32), found in Dictyostelium discoideum (Social amoeba).